Here is a 443-residue protein sequence, read N- to C-terminus: UDP-N-acetylmuramate--L-alanine ligase (443 aa).

110–116 contributes to the ATP binding site; the sequence is GAHGKTS.

This sequence belongs to the MurCDEF family.

Its subcellular location is the cytoplasm. It catalyses the reaction UDP-N-acetyl-alpha-D-muramate + L-alanine + ATP = UDP-N-acetyl-alpha-D-muramoyl-L-alanine + ADP + phosphate + H(+). The protein operates within cell wall biogenesis; peptidoglycan biosynthesis. Its function is as follows. Cell wall formation. This chain is UDP-N-acetylmuramate--L-alanine ligase, found in Streptococcus agalactiae serotype III (strain NEM316).